The sequence spans 382 residues: Albumin (382 aa).

Albumin domains lie at 1-178 (KCRI…ILLE) and 179-377 (AALK…GLLQ). Cystine bridges form between C2–C48, C47–C55, C67–C81, C80–C91, C116–C161, C160–C169, C192–C238, C237–C248, C261–C277, C276–C287, C314–C359, and C358–C367. Ca(2+) is bound by residues D51 and E54. Residue D51 coordinates Zn(2+).

This sequence belongs to the ALB/AFP/VDB family. As to expression, plasma.

The protein localises to the secreted. Functionally, serum albumin, the main protein of plasma, has a good binding capacity for water, Ca(2+), Na(+), K(+), fatty acids, hormones, bilirubin and drugs. Its main function is the regulation of the colloidal osmotic pressure of blood. The chain is Albumin (ALB) from Aquarana catesbeiana (American bullfrog).